Reading from the N-terminus, the 227-residue chain is Ribonuclease 3 (227 aa).

An RNase III domain is found at 4–126 (LDRLERKIGY…IIGAMSLDQG (123 aa)). Glu-39 is a Mg(2+) binding site. Asp-43 is an active-site residue. Asp-112 and Glu-115 together coordinate Mg(2+). The active site involves Glu-115. In terms of domain architecture, DRBM spans 153-226 (DAKTRLQEYL…AEQILKELDI (74 aa)).

It belongs to the ribonuclease III family. As to quaternary structure, homodimer. The cofactor is Mg(2+).

The protein localises to the cytoplasm. The enzyme catalyses Endonucleolytic cleavage to 5'-phosphomonoester.. Functionally, digests double-stranded RNA. Involved in the processing of primary rRNA transcript to yield the immediate precursors to the large and small rRNAs (23S and 16S). Processes some mRNAs, and tRNAs when they are encoded in the rRNA operon. Processes pre-crRNA and tracrRNA of type II CRISPR loci if present in the organism. The chain is Ribonuclease 3 from Haemophilus influenzae (strain PittGG).